The chain runs to 211 residues: HTH-type transcriptional regulator AlkX (211 aa).

Positions 22–82 constitute an HTH tetR-type domain; the sequence is ALLRDSVLDA…GYALRLADRL (61 aa). The H-T-H motif DNA-binding region spans 45 to 64; sequence TLSDVARAAGISRQTIYNEF.

In terms of assembly, homodimer.

The protein localises to the cytoplasm. With respect to regulation, DNA-binding activity may be regulated by fatty acids. Functionally, represses the expression of the alkB-rubAB operon, which encodes the alkane hydroxylase AlkB and the rubredoxins RubA and RubB. Acts by binding to the promoter region of the operon. In addition, EMSA analysis show that AlkX can bind to the promoter region of mmpS1 and mmpL3 and to the intragenic region of mmpL11, suggesting that it may participate in the regulatory network that controls the expression of MmpL lipid transporters. This is HTH-type transcriptional regulator AlkX from Mycobacterium tuberculosis (strain ATCC 25618 / H37Rv).